Here is a 155-residue protein sequence, read N- to C-terminus: UPF0251 protein Paes_1249 (155 aa).

Belongs to the UPF0251 family.

The sequence is that of UPF0251 protein Paes_1249 from Prosthecochloris aestuarii (strain DSM 271 / SK 413).